Consider the following 306-residue polypeptide: Bifunctional protein FolD (306 aa).

NADP(+)-binding positions include 164–166 (GRS), S189, and T230.

Belongs to the tetrahydrofolate dehydrogenase/cyclohydrolase family. Homodimer.

The catalysed reaction is (6R)-5,10-methylene-5,6,7,8-tetrahydrofolate + NADP(+) = (6R)-5,10-methenyltetrahydrofolate + NADPH. The enzyme catalyses (6R)-5,10-methenyltetrahydrofolate + H2O = (6R)-10-formyltetrahydrofolate + H(+). It participates in one-carbon metabolism; tetrahydrofolate interconversion. Catalyzes the oxidation of 5,10-methylenetetrahydrofolate to 5,10-methenyltetrahydrofolate and then the hydrolysis of 5,10-methenyltetrahydrofolate to 10-formyltetrahydrofolate. The polypeptide is Bifunctional protein FolD (Solibacter usitatus (strain Ellin6076)).